A 4043-amino-acid polypeptide reads, in one-letter code: Hybrid PKS-NRPS synthetase thnA (4043 aa).

Residues 6–440 (LEPIAIVGSA…GSNAHAILEE (435 aa)) enclose the Ketosynthase family 3 (KS3) domain. Active-site for beta-ketoacyl synthase activity residues include cysteine 179, histidine 319, and histidine 360. Residues 558-894 (VFTGQGAQWA…FSDALGFVWT (337 aa)) are malonyl-CoA:ACP transacylase (MAT) domain. The tract at residues 952–1090 (HEILGTILPE…ATVKIILGTP (139 aa)) is N-terminal hotdog fold. The tract at residues 952-1256 (HEILGTILPE…LSIKTFAPAT (305 aa)) is dehydratase (DH) domain. The PKS/mFAS DH domain occupies 952 to 1258 (HEILGTILPE…IKTFAPATQA (307 aa)). The Proton acceptor; for dehydratase activity role is filled by histidine 984. Residues 1105–1258 (LFPIDADRFY…IKTFAPATQA (154 aa)) form a C-terminal hotdog fold region. The active-site Proton donor; for dehydratase activity is aspartate 1166. The segment at 1417-1591 (LASMMKQITH…RKAGFAGVDA (175 aa)) is methyltransferase (MT) domain. Positions 2146–2320 (TYLLVGLTGK…GSTFDIGQVA (175 aa)) are ketoreductase (KR) domain. The Carrier 1 domain maps to 2434 to 2512 (EQALDILKEC…ELCDRVVDKL (79 aa)). Residue serine 2472 is modified to O-(pantetheine 4'-phosphoryl)serine. Residues 2521 to 2618 (GKQGESQPPA…PPPPEPAVER (98 aa)) form a disordered region. The span at 2527–2536 (QPPASTAQPQ) shows a compositional bias: low complexity. Residues 2537-2547 (PVAPKPKPLPV) show a composition bias toward pro residues. Polar residues predominate over residues 2578 to 2605 (YSATEASTRSGSPSEATRLSQKVSSKLQ). Residues 2626 to 3067 (IKSVPISLGQ…IPRFSEKQLA (442 aa)) are condensation (C) domain. The interval 3092 to 3496 (QVARENPDKV…GTMVFHSRMA (405 aa)) is adenylation (A) domain. Residues 3614–3695 (TELTETMIQL…EMAQKVEETI (82 aa)) enclose the Carrier 2 domain. At serine 3655 the chain carries O-(pantetheine 4'-phosphoryl)serine. Residues 3736-3954 (ITGATGFLSK…DMLPAVLTAQ (219 aa)) form a reductase (R) domain region.

In the C-terminal section; belongs to the NRP synthetase family.

The enzyme catalyses malate + 6 malonyl-CoA + acetyl-CoA + 2 AH2 + 2 S-adenosyl-L-methionine + 5 NADPH + 9 H(+) = trihazone A + 2 A + 2 S-adenosyl-L-homocysteine + 6 CO2 + 5 NADP(+) + 7 CoA + 6 H2O. Its pathway is secondary metabolite biosynthesis. Its function is as follows. Hybrid PKS-NRPS synthetase; part of the gene cluster that produces the tetronate natural products trihazones. The PKS-NRPS synthetase thnA with the help of the trans-enoyl reductase thnE are responsible for the synthesis of the carboxylmethyl containing trihazone A. The PKS portion of thnA synthesizes beta-keto-triene chain from one acetyl-CoA and 6 equivalents of malonyl-CoA, in collaboration with thnE, which selectively reduces the enoyl intermediate during the first and fourth iteration of the PKS. The NRPS domain selects and activates malate, of which the alpha-hydroxyl group attacks the completed polyketide acyl-S-ACP chain to form the ester product. Intramolecular Dieckmann cyclization catalyzed by the terminal reductase domain releases the product as trihazone A from the PKS-NPRS. The pathway begins with the formation of trihazone A by the hybrid PKS-NRPS synthetase thnA and the trans-enoyl reductase thnE. Trihazone A is further decarboxylated by the 2-oxoglutarate-dependent dioxygenase thnC to produce trihazone D. The function of the FAD-dependent monooxygenase thnD has still to be identified. This chain is Hybrid PKS-NRPS synthetase thnA, found in Trichoderma harzianum (Hypocrea lixii).